Consider the following 68-residue polypeptide: Beta-defensin 1 (68 aa).

Residues 1-21 (MRTSYLLLFTLCLLLSEMASG) form the signal peptide. Residues 22–32 (GNFLTGLGHRS) constitute a propeptide that is removed on maturation. Disulfide bonds link Cys37–Cys66, Cys44–Cys59, and Cys49–Cys67.

It belongs to the beta-defensin family. Monomer. Homodimer.

The protein localises to the secreted. Its subcellular location is the membrane. Its function is as follows. Has bactericidal activity. May act as a ligand for C-C chemokine receptor CCR6. Positively regulates the sperm motility and bactericidal activity in a CCR6-dependent manner. Binds to CCR6 and triggers Ca2+ mobilization in the sperm which is important for its motility. In Pongo pygmaeus (Bornean orangutan), this protein is Beta-defensin 1 (DEFB1).